The following is a 220-amino-acid chain: Chloramphenicol acetyltransferase (220 aa).

The active-site Proton acceptor is the His-187.

The protein belongs to the chloramphenicol acetyltransferase family. Homotrimer.

The enzyme catalyses chloramphenicol + acetyl-CoA = chloramphenicol 3-acetate + CoA. Its function is as follows. This enzyme is an effector of chloramphenicol resistance in bacteria. This Bacillus pumilus (Bacillus mesentericus) protein is Chloramphenicol acetyltransferase (cat86).